A 410-amino-acid polypeptide reads, in one-letter code: Elongation factor Tu, chloroplastic (410 aa).

In terms of domain architecture, tr-type G spans 10–214 (KPHVNIGTIG…NVDEYIPTPE (205 aa)). The segment at 19-26 (GHVDHGKT) is G1. 19-26 (GHVDHGKT) is a binding site for GTP. Thr26 contributes to the Mg(2+) binding site. Residues 60-64 (GITIN) form a G2 region. Positions 81-84 (DCPG) are G3. Residues 81–85 (DCPGH) and 136–139 (NKED) contribute to the GTP site. A G4 region spans residues 136 to 139 (NKED). The tract at residues 174 to 176 (SAL) is G5.

This sequence belongs to the TRAFAC class translation factor GTPase superfamily. Classic translation factor GTPase family. EF-Tu/EF-1A subfamily.

It localises to the plastid. The protein localises to the chloroplast stroma. The catalysed reaction is GTP + H2O = GDP + phosphate + H(+). Functionally, GTP hydrolase that promotes the GTP-dependent binding of aminoacyl-tRNA to the A-site of ribosomes during protein biosynthesis. This chain is Elongation factor Tu, chloroplastic (tufA), found in Bigelowiella natans (Pedinomonas minutissima).